We begin with the raw amino-acid sequence, 99 residues long: Aspartyl/glutamyl-tRNA(Asn/Gln) amidotransferase subunit C (99 aa).

Belongs to the GatC family. In terms of assembly, heterotrimer of A, B and C subunits.

The catalysed reaction is L-glutamyl-tRNA(Gln) + L-glutamine + ATP + H2O = L-glutaminyl-tRNA(Gln) + L-glutamate + ADP + phosphate + H(+). It carries out the reaction L-aspartyl-tRNA(Asn) + L-glutamine + ATP + H2O = L-asparaginyl-tRNA(Asn) + L-glutamate + ADP + phosphate + 2 H(+). Functionally, allows the formation of correctly charged Asn-tRNA(Asn) or Gln-tRNA(Gln) through the transamidation of misacylated Asp-tRNA(Asn) or Glu-tRNA(Gln) in organisms which lack either or both of asparaginyl-tRNA or glutaminyl-tRNA synthetases. The reaction takes place in the presence of glutamine and ATP through an activated phospho-Asp-tRNA(Asn) or phospho-Glu-tRNA(Gln). The sequence is that of Aspartyl/glutamyl-tRNA(Asn/Gln) amidotransferase subunit C from Solibacter usitatus (strain Ellin6076).